Consider the following 1118-residue polypeptide: Phytochrome 1 (1118 aa).

Low complexity predominate over residues 1–10 (MSSTRHSYSS). The disordered stretch occupies residues 1–23 (MSSTRHSYSSGGSGKSKHGRRIA). Residues 212–391 (DIGLLCDSVV…VFSLQLNMEV (180 aa)) form the GAF domain. Phytochromobilin is bound at residue Cys-317. PAS domains are found at residues 606–677 (VASE…LEGE) and 740–811 (DYKA…TKLM). A Histidine kinase domain is found at 887 to 1110 (YVKEELKKPL…LVTIQFPLAH (224 aa)).

The protein belongs to the phytochrome family. In terms of assembly, homodimer. Post-translationally, contains one covalently linked phytochromobilin chromophore.

Its function is as follows. Regulatory photoreceptor which exists in two forms that are reversibly interconvertible by light: the Pr form that absorbs maximally in the red region of the spectrum and the Pfr form that absorbs maximally in the far-red region. Photoconversion of Pr to Pfr induces an array of morphogenic responses, whereas reconversion of Pfr to Pr cancels the induction of those responses. Pfr controls the expression of a number of nuclear genes including those encoding the small subunit of ribulose-bisphosphate carboxylase, chlorophyll A/B binding protein, protochlorophyllide reductase, rRNA, etc. It also controls the expression of its own gene(s) in a negative feedback fashion. This is Phytochrome 1 (PHY1) from Adiantum capillus-veneris (Maidenhair fern).